We begin with the raw amino-acid sequence, 234 residues long: UPF0502 protein Bphyt_5265 (234 aa).

This sequence belongs to the UPF0502 family.

The sequence is that of UPF0502 protein Bphyt_5265 from Paraburkholderia phytofirmans (strain DSM 17436 / LMG 22146 / PsJN) (Burkholderia phytofirmans).